Reading from the N-terminus, the 507-residue chain is MDVSNETVERTDLRTPLVDPADTEVKPLPEVGLESVLTESSLSYRRRVYLGACIELKVLFRLALPAILIYLVNSGMGISARVFAGHVGSQELAAASIGNSCFNLVYGLMLGMGSAVETLCGQAYGAHRYEMLGIYLQRATIVLALVGLPMTLLYTFSYPILILLGEPKTVSYMGSKYIAGLIPQIFAYAVNFTAQKFLQAQSVVAPSAFISAAALILQILLTWITVYVMDMGFMGIAYVLTISWWVIVGSQCFYIAVSPKFRHTWTGLSWRSLQGLWSFFKLSAGSAVMICLEMWYSQILVLLAGLLENPARSLDSLSICMSISALSFMVSVGFNAAVSVRTSNELGAGNPKSAWFSTWTATFVSFVISVTEALAVIWFRDYVSYIFTEDADVAKAVSDLCPFLAITIILNGIQPVLSGVAVGCGWQTYVAYVNVGCYYVVGIPVGCILGFTFDFQAKGIWTGMIGGTLMQTLILLYVTYRTDWDKEVEKARKRLDLWDDKKEPLQN.

The next 12 membrane-spanning stretches (helical) occupy residues 58–78 (VLFR…GMGI), 92–112 (LAAA…MLGM), 141–161 (IVLA…YPIL), 178–198 (IAGL…QKFL), 209–229 (FISA…VYVM), 233–253 (FMGI…SQCF), 287–307 (AVMI…AGLL), 318–338 (SICM…NAAV), 359–379 (WTAT…VIWF), 403–423 (FLAI…VAVG), 433–453 (VNVG…GFTF), and 459–479 (GIWT…LYVT).

It belongs to the multi antimicrobial extrusion (MATE) (TC 2.A.66.1) family.

The protein localises to the membrane. In Arabidopsis thaliana (Mouse-ear cress), this protein is Protein DETOXIFICATION 39.